The primary structure comprises 596 residues: Elongation factor 4 (596 aa).

A tr-type G domain is found at 2–183; it reads ENIRNFCIIA…AIIQRIPPPK (182 aa). GTP contacts are provided by residues 14–19 and 130–133; these read DHGKST and NKID.

It belongs to the TRAFAC class translation factor GTPase superfamily. Classic translation factor GTPase family. LepA subfamily.

The protein resides in the cell inner membrane. The enzyme catalyses GTP + H2O = GDP + phosphate + H(+). Functionally, required for accurate and efficient protein synthesis under certain stress conditions. May act as a fidelity factor of the translation reaction, by catalyzing a one-codon backward translocation of tRNAs on improperly translocated ribosomes. Back-translocation proceeds from a post-translocation (POST) complex to a pre-translocation (PRE) complex, thus giving elongation factor G a second chance to translocate the tRNAs correctly. Binds to ribosomes in a GTP-dependent manner. The chain is Elongation factor 4 from Cytophaga hutchinsonii (strain ATCC 33406 / DSM 1761 / CIP 103989 / NBRC 15051 / NCIMB 9469 / D465).